The following is a 409-amino-acid chain: S-adenosylmethionine synthase (409 aa).

141–146 (GQGSAD) contributes to the ATP binding site.

Belongs to the AdoMet synthase 2 family. Mg(2+) is required as a cofactor.

The enzyme catalyses L-methionine + ATP + H2O = S-adenosyl-L-methionine + phosphate + diphosphate. Its pathway is amino-acid biosynthesis; S-adenosyl-L-methionine biosynthesis; S-adenosyl-L-methionine from L-methionine: step 1/1. Its function is as follows. Catalyzes the formation of S-adenosylmethionine from methionine and ATP. The polypeptide is S-adenosylmethionine synthase (Hyperthermus butylicus (strain DSM 5456 / JCM 9403 / PLM1-5)).